The chain runs to 360 residues: Probable nuclear hormone receptor HR38 (360 aa).

The segment at 1–21 (GSSSPGVAPADNTGPRAAPSS) is disordered. The nuclear receptor DNA-binding region spans 23-98 (SQLCAVCGDT…VGMVKEVVRT (76 aa)). NR C4-type zinc fingers lie at residues 26–46 (CAVC…CEGC) and 62–86 (CLAE…FQKC). The NR LBD domain maps to 122–357 (PPISLITALV…PLIENMFRAS (236 aa)).

This sequence belongs to the nuclear hormone receptor family. NR4 subfamily. Forms a heterodimer with USP.

Its subcellular location is the nucleus. This is Probable nuclear hormone receptor HR38 (HR38) from Bombyx mori (Silk moth).